Here is a 223-residue protein sequence, read N- to C-terminus: Small ribosomal subunit protein uS3 (223 aa).

One can recognise a KH type-2 domain in the interval 39–107 (VRSYLAKKLS…PVHINIQEIR (69 aa)).

This sequence belongs to the universal ribosomal protein uS3 family. As to quaternary structure, part of the 30S ribosomal subunit. Forms a tight complex with proteins S10 and S14.

Its function is as follows. Binds the lower part of the 30S subunit head. Binds mRNA in the 70S ribosome, positioning it for translation. The chain is Small ribosomal subunit protein uS3 from Nitrosococcus oceani (strain ATCC 19707 / BCRC 17464 / JCM 30415 / NCIMB 11848 / C-107).